We begin with the raw amino-acid sequence, 145 residues long: 3-hydroxyacyl-[acyl-carrier-protein] dehydratase FabZ (145 aa).

Histidine 47 is an active-site residue.

The protein belongs to the thioester dehydratase family. FabZ subfamily.

The protein localises to the cytoplasm. It catalyses the reaction a (3R)-hydroxyacyl-[ACP] = a (2E)-enoyl-[ACP] + H2O. Functionally, involved in unsaturated fatty acids biosynthesis. Catalyzes the dehydration of short chain beta-hydroxyacyl-ACPs and long chain saturated and unsaturated beta-hydroxyacyl-ACPs. The protein is 3-hydroxyacyl-[acyl-carrier-protein] dehydratase FabZ of Polaromonas sp. (strain JS666 / ATCC BAA-500).